We begin with the raw amino-acid sequence, 345 residues long: Beta-ketoacyl-[acyl-carrier-protein] synthase III (345 aa).

Active-site residues include cysteine 114 and histidine 272. The ACP-binding stretch occupies residues 273–277 (QANQR). Asparagine 302 is a catalytic residue.

The protein belongs to the thiolase-like superfamily. FabH family. Homodimer.

It localises to the cytoplasm. It catalyses the reaction malonyl-[ACP] + acetyl-CoA + H(+) = 3-oxobutanoyl-[ACP] + CO2 + CoA. It participates in lipid metabolism; fatty acid biosynthesis. Its function is as follows. Catalyzes the condensation reaction of fatty acid synthesis by the addition to an acyl acceptor of two carbons from malonyl-ACP. Catalyzes the first condensation reaction which initiates fatty acid synthesis and may therefore play a role in governing the total rate of fatty acid production. Possesses both acetoacetyl-ACP synthase and acetyl transacylase activities. Its substrate specificity determines the biosynthesis of branched-chain and/or straight-chain of fatty acids. The protein is Beta-ketoacyl-[acyl-carrier-protein] synthase III of Rhodopirellula baltica (strain DSM 10527 / NCIMB 13988 / SH1).